A 627-amino-acid chain; its full sequence is MERPEPPPGTAAGQEEQELRERAFFSWAEFSRFFDAWCQQRLALFFVKSSMHLARCRWASAPPLYTLIDVLKYSYVRLVCKDVRAPSRPAVGPPQPGCPAFIIVKLSPLRDRLVVTECQLTHSHPACPLEFAYYFRPGHLLANACLPVRTTNKISKQFVAPADVRRLLSYCKGRDHGVLDALHVLEGLFRTDPEAKVKLVFVEDQAVVETVFFLTSRTRALLRRFPRMLLVDRLPGLQGALDLLAVLCVDGSGRARQAACCVARPGTPSLLRFALASLLQSAPDVKGRVRCLTAGPEVAAQLPAVRQLLPCARVQICRAQGLETLFSKAQELGGAGREDPGLWSRLCRLAGASSPAAYDEALAELHAHGPAAFVDYFERNWEPRRDMWVRFRAFEAARDLDACALVRGHRRRLLRRLSPSRGVAQCLRDLVAMQWADAAGEAVPEGPDGGGPWLEDEPGRGAQGENERVRGLETGDWGGAPKEGSIWRGAQMEKEWARALETRDWGGAQFEGEKGRALQIRDWRGGRLENQKPRGLEGGVLRGSKLEKGHLRGPEIRDWRGPQLEGEKDWGLEGYVWRGSQLEDQALRGLEGYTWRVAQLEDRRSTTDLRGTQFDYERGKGESTEDR.

2 disordered regions span residues 441–466 (EAVP…QGEN) and 608–627 (DLRG…TEDR). Positions 615–627 (DYERGKGESTEDR) are enriched in basic and acidic residues.

This is an uncharacterized protein from Homo sapiens (Human).